A 62-amino-acid polypeptide reads, in one-letter code: Cecropin-A (62 aa).

Positions 1-20 are cleaved as a signal peptide; that stretch reads MNLVKILFCVFACLVFTVTA. The propeptide at 21–24 is removed by a dipeptidylpeptidase; it reads VPEP. Thr60 is subject to Threonine amide.

It belongs to the cecropin family.

Its subcellular location is the secreted. Functionally, has antibacterial activity. The polypeptide is Cecropin-A (Trichoplusia ni (Cabbage looper)).